We begin with the raw amino-acid sequence, 600 residues long: Transcription factor efl-3 (600 aa).

A disordered region spans residues 35–65 (LPEPRVNRTTDPDHENLLPSPVPRPSPAMSQ). Residues 39 to 50 (RVNRTTDPDHEN) are compositionally biased toward basic and acidic residues. DNA-binding regions lie at residues 95–164 (RKEK…QWQG) and 253–343 (RDRQ…VYCG).

The protein belongs to the E2F/DP family.

Its subcellular location is the nucleus. In terms of biological role, probable transcription factor which represses gene expression in a subset of ventral nerve cord neurons. Involved in regulating programmed cell death and determining cell fate during development, acting in a partially redundant manner with lin-39 to repress the BH3 domain-encoding gene egl-1 in the VA and VB motor neurons. The protein is Transcription factor efl-3 of Caenorhabditis elegans.